Here is a 109-residue protein sequence, read N- to C-terminus: Nucleoid-associated protein SG0690 (109 aa).

A disordered region spans residues 1-23 (MFGKGGMGNLMKQAQQMQEKMQR).

The protein belongs to the YbaB/EbfC family. As to quaternary structure, homodimer.

The protein resides in the cytoplasm. It is found in the nucleoid. Functionally, binds to DNA and alters its conformation. May be involved in regulation of gene expression, nucleoid organization and DNA protection. The protein is Nucleoid-associated protein SG0690 of Sodalis glossinidius (strain morsitans).